The primary structure comprises 146 residues: Large ribosomal subunit protein uL11 (146 aa).

It belongs to the universal ribosomal protein uL11 family. As to quaternary structure, part of the ribosomal stalk of the 50S ribosomal subunit. Interacts with L10 and the large rRNA to form the base of the stalk. L10 forms an elongated spine to which L12 dimers bind in a sequential fashion forming a multimeric L10(L12)X complex. In terms of processing, one or more lysine residues are methylated.

In terms of biological role, forms part of the ribosomal stalk which helps the ribosome interact with GTP-bound translation factors. This chain is Large ribosomal subunit protein uL11, found in Corynebacterium jeikeium (strain K411).